A 356-amino-acid chain; its full sequence is Phosphoribosyl pyrophosphate synthase-associated protein 1 (356 aa).

M1 bears the N-acetylmethionine mark. N2 is subject to N-acetylproline. S177 and S215 each carry phosphoserine.

The protein belongs to the ribose-phosphate pyrophosphokinase family. As to quaternary structure, binds to PRPS1 and PRPS2. Ubiquitous.

Functionally, seems to play a negative regulatory role in 5-phosphoribose 1-diphosphate synthesis. The sequence is that of Phosphoribosyl pyrophosphate synthase-associated protein 1 (PRPSAP1) from Homo sapiens (Human).